The following is a 483-amino-acid chain: MAHRILRDHEADGWERSDFPIICESCLGDNPYVRMTKANYDKECKICTRPFTVFRWRPGRDARYKKTEVCQTCCKLKNVCQVCLLDLEYGLPVQVRDTALNISTHDSIPKSDVNREFFAEEHDRKTRAGLDYESSFGKIRPNDTIRMLQRTTPYYKRNRAHICSFFIRGECTRGDECPYRHEMPETGELSQQNIKDRYYGVNDPVALKLLGKAGEMGTLESPEDQSIRTLYVGGLNSRVLEQDIRDQFYAHGEIESIRILAEKACAFVTYTTREGAEKAAEELSNRLVVNGQRLKLTWGRPQVPKPDQDGSNQQGSVAHSGLLPRAVISQQQNQPPPMLQYYMHPPPPQPPHQDRPFYPSMDPQRMGAVSSSKESGSSTSDNRGASSSSYTMPPHGHYPQHQPYPPPSYGGYMQPPYQQYPPYHHGHSQQADHDYPQQPGPGSRPNPPHPSSVSAPPPDSVSAAPSGSSQQSADAAVTTGSSQ.

The C3H1-type zinc-finger motif lies at 157–184; that stretch reads RNRAHICSFFIRGECTRGDECPYRHEMP. The RRM domain occupies 228-301; the sequence is RTLYVGGLNS…QRLKLTWGRP (74 aa). Disordered stretches follow at residues 298 to 317 and 336 to 483; these read WGRP…QGSV and PPML…GSSQ. Residues 336 to 351 are compositionally biased toward pro residues; the sequence is PPMLQYYMHPPPPQPP. Positions 370–380 are enriched in low complexity; that stretch reads SSSKESGSSTS. The segment covering 381 to 391 has biased composition (polar residues); the sequence is DNRGASSSSYT. Low complexity-rich tracts occupy residues 392–401 and 409–423; these read MPPHGHYPQH and YGGY…YPPY. Pro residues predominate over residues 438 to 459; it reads QPGPGSRPNPPHPSSVSAPPPD. Residues 460–476 are compositionally biased toward low complexity; that stretch reads SVSAAPSGSSQQSADAA.

The chain is Zinc finger CCCH domain-containing protein 25 from Arabidopsis thaliana (Mouse-ear cress).